The primary structure comprises 1173 residues: PR domain zinc finger protein 10 (1173 aa).

The interval R146–N211 is disordered. Residues D154–A167 show a composition bias toward polar residues. Residues K172–A202 are compositionally biased toward acidic residues. In terms of domain architecture, SET spans L248–A366. Residues I267 to E371 form an N-terminal PR domain; essential for transcriptional activator activity region. The segment at W395 to H417 adopts a C2H2-type 1 zinc-finger fold. Positions R430–R447 are enriched in basic residues. A disordered region spans residues R430–F451. 9 consecutive C2H2-type zinc fingers follow at residues F559–H581, L589–H611, Y617–H639, F645–H668, Y673–H695, F701–H724, F756–H779, Y801–H824, and V863–H886. A C-terminal glutamine-rich region; essential for transcriptional activator activity region spans residues Q926–Q1153. 2 disordered regions span residues P1014–A1056 and K1125–P1173. Positions Q1150 to T1160 are enriched in low complexity. The span at N1161–P1173 shows a compositional bias: polar residues.

Belongs to the class V-like SAM-binding methyltransferase superfamily.

It localises to the nucleus. Functionally, transcriptional activator, essential for early embryonic development and survival of embryonic stem cells (ESCs). Supports cell growth and survival during early development by transcriptionally activating the expression of the translation initiation factor EIF3B, to sustain global translation. Activates the transcription of FLNC. The sequence is that of PR domain zinc finger protein 10 (prdm10) from Xenopus tropicalis (Western clawed frog).